A 184-amino-acid polypeptide reads, in one-letter code: GTP-binding protein Rheb (184 aa).

Residue lysine 8 forms a Glycyl lysine isopeptide (Lys-Gly) (interchain with G-Cter in ubiquitin) linkage. 8 residues coordinate GDP: serine 16, valine 17, glycine 18, lysine 19, serine 20, serine 21, valine 32, and aspartate 33. GTP-binding residues include serine 16, valine 17, glycine 18, lysine 19, serine 20, serine 21, valine 32, aspartate 33, tyrosine 35, proline 37, threonine 38, glycine 63, asparagine 119, lysine 120, and aspartate 122. Serine 20 is a binding site for Mg(2+). Positions tyrosine 35 to phenylalanine 43 match the Effector region motif. Threonine 38 provides a ligand contact to Mg(2+). Asparagine 119 provides a ligand contact to GDP. Position 122 (aspartate 122) interacts with GDP. At serine 130 the chain carries Phosphoserine; by MAPKAPK5. Alanine 150 contributes to the GDP binding site. GTP is bound at residue alanine 150. Position 181 is a cysteine methyl ester (cysteine 181). The S-farnesyl cysteine moiety is linked to residue cysteine 181. A propeptide spans serine 182–methionine 184 (removed in mature form).

This sequence belongs to the small GTPase superfamily. Rheb family. In terms of assembly, associates with the mTORC1 complex (MTOR, MLST8 and RPTOR) in a guanyl nucleotide-independent manner. Interacts with TSC2. Interacts with MCRS1; the interaction maintains RHEB at the lysosome in its active GTP-bound form and prevents its interaction with the mTORC1 complex inhibitor TSC2, ensuring activation of the mTORC1 complex by RHEB. Interacts (when prenylated) with PDE6D; this promotes release from membranes. Farnesylation is important for efficiently activating mTORC1-mediated signaling. In terms of processing, polyubiquitinated in response to amino acid, promoting its interaction with MTOR and mTORC1 activation. Deubiquitination by ATXN3 promotes recruitment of the TSC-TBC complex and RHEB inactivation by TSC2. Monoubiquitinated at Lys-8 by RNF152, promoting its association with the TSC-TBC complex. Deubiquitinated at Lys-8 by USP4, promoting mTORC1 activation. Post-translationally, phosphorylation by MAPKAPK5 impairs GTP-binding and inactivation.

It is found in the endomembrane system. The protein resides in the lysosome membrane. The protein localises to the golgi apparatus membrane. Its subcellular location is the endoplasmic reticulum membrane. It localises to the cytoplasm. It is found in the cytosol. It carries out the reaction GTP + H2O = GDP + phosphate + H(+). With respect to regulation, alternates between an inactive form bound to GDP and an active form bound to GTP. Inactivated by the TSC-TBC complex via the GTPase activating protein (GAP) domain of TSC2. Autoinhibited by Tyr-35, which constrains the active site conformation, restricting the access of the catalytic Asp-65 to the nucleotide-binding pocket. Functionally, small GTPase that acts as an allosteric activator of the canonical mTORC1 complex, an evolutionarily conserved central nutrient sensor that stimulates anabolic reactions and macromolecule biosynthesis to promote cellular biomass generation and growth. In response to nutrients, growth factors or amino acids, specifically activates the protein kinase activity of MTOR, the catalytic component of the mTORC1 complex: acts by causing a conformational change that allows the alignment of residues in the active site of MTOR, thereby enhancing the phosphorylation of ribosomal protein S6 kinase (RPS6KB1 and RPS6KB2) and EIF4EBP1 (4E-BP1). RHEB is also required for localization of the TSC-TBC complex to lysosomal membranes. In response to starvation, RHEB is inactivated by the TSC-TBC complex, preventing activation of mTORC1. Has low intrinsic GTPase activity. This Mus musculus (Mouse) protein is GTP-binding protein Rheb.